The following is a 382-amino-acid chain: Intermediate transcription factor 3 large subunit (382 aa).

Belongs to the orthopoxvirus OPG150 family. As to quaternary structure, heterodimerizes with protein A8 to form the virus intermediate transcription factor (VITF)-3.

Its function is as follows. Acts with RNA polymerase to initiate transcription from intermediate gene promoters. This is Intermediate transcription factor 3 large subunit (OPG150) from Homo sapiens (Human).